The chain runs to 325 residues: Putative S-adenosyl-L-methionine-dependent methyltransferase MT0917 (325 aa).

Residues Asp126 and 155-156 (DL) each bind S-adenosyl-L-methionine.

This sequence belongs to the UPF0677 family.

Functionally, exhibits S-adenosyl-L-methionine-dependent methyltransferase activity. The chain is Putative S-adenosyl-L-methionine-dependent methyltransferase MT0917 from Mycobacterium tuberculosis (strain CDC 1551 / Oshkosh).